The sequence spans 155 residues: MLKKKKTEVYALGQHISMSADKARRVIDQIRGRSYEETLIILELMPYRACYPIFKLVYSAAANASYNMSSNDANLLISKAEVNEGTTIKKFKPRARGRSYPIKRPTCHITIVMKDISLDDEYVKINSLKKPRWKNKHTAMVYHDMYSSGGVWDKK.

This sequence belongs to the universal ribosomal protein uL22 family. In terms of assembly, part of the 50S ribosomal subunit.

The protein resides in the plastid. The protein localises to the chloroplast. This protein binds specifically to 23S rRNA. Its function is as follows. The globular domain of the protein is located near the polypeptide exit tunnel on the outside of the subunit, while an extended beta-hairpin is found that lines the wall of the exit tunnel in the center of the 70S ribosome. The polypeptide is Large ribosomal subunit protein uL22c (rpl22) (Coffea arabica (Arabian coffee)).